The following is a 177-amino-acid chain: Protein Flattop (177 aa).

The tract at residues 113–177 (ILGKPHDPDS…TPGPQRPAKS (65 aa)) is disordered. Positions 115–124 (GKPHDPDSQK) are enriched in basic and acidic residues. Over residues 132 to 163 (TKTVQQARSPTIIPSSPAANLNSPDELQSSHP) the composition is skewed to polar residues.

It belongs to the Flattop family. Microtubule inner protein component of sperm flagellar doublet microtubules. Interacts with DLG3. As to expression, expressed in airway epithelial cells.

Its subcellular location is the cytoplasm. It is found in the cytoskeleton. It localises to the cilium basal body. The protein resides in the cell projection. The protein localises to the cilium. Its subcellular location is the apical cell membrane. It is found in the cilium axoneme. It localises to the flagellum axoneme. Functionally, microtubule inner protein (MIP) part of the dynein-decorated doublet microtubules (DMTs) in cilia axoneme. Acts as a regulator of cilium basal body docking and positioning in mono- and multiciliated cells. Regulates basal body docking and cilia formation in multiciliated lung cells. Regulates kinocilium positioning and stereocilia bundle morphogenesis in the inner ear. In Homo sapiens (Human), this protein is Protein Flattop.